A 114-amino-acid polypeptide reads, in one-letter code: Large ribosomal subunit protein bL19 (114 aa).

It belongs to the bacterial ribosomal protein bL19 family.

In terms of biological role, this protein is located at the 30S-50S ribosomal subunit interface and may play a role in the structure and function of the aminoacyl-tRNA binding site. The chain is Large ribosomal subunit protein bL19 from Clostridium acetobutylicum (strain ATCC 824 / DSM 792 / JCM 1419 / IAM 19013 / LMG 5710 / NBRC 13948 / NRRL B-527 / VKM B-1787 / 2291 / W).